Here is a 522-residue protein sequence, read N- to C-terminus: DNA damage-binding protein cmr1 (522 aa).

The segment covering 34–47 has biased composition (polar residues); sequence VFTPTLPNRATGSQ. 2 disordered regions span residues 34 to 89 and 217 to 239; these read VFTP…KRKA and QEKP…DPVL. Positions 49 to 59 are enriched in basic residues; it reads KTKKKPAPKKV. One copy of the WD 1 repeat lies at 182–223; sequence LTPERVYTMTFHPSETKPLIFAGDKMGHLGILDASQEKPTSV. Residues 226-236 are compositionally biased toward acidic residues; it reads EDEDEEDDDPD. 6 WD repeats span residues 244–284, 294–331, 336–376, 381–422, 445–488, and 491–522; these read PHTR…SVER, VPLS…QGSV, LSEK…RREP, EHQS…ASWK, GRWV…LAQL, and DGIT…CLWM.

The protein belongs to the WD repeat DDB2/WDR76 family.

Functionally, DNA-binding protein that binds to both single- and double-stranded DNA. Binds preferentially to UV-damaged DNA. May be involved in DNA-metabolic processes. This chain is DNA damage-binding protein cmr1, found in Aspergillus oryzae (strain ATCC 42149 / RIB 40) (Yellow koji mold).